Here is a 348-residue protein sequence, read N- to C-terminus: Small ribosomal subunit biogenesis GTPase RsgA (348 aa).

A compositionally biased stretch (basic residues) spans 1-14; sequence MAKRKLSKQQKWRI. The segment at 1–39 is disordered; the sequence is MAKRKLSKQQKWRIQKIQDERTKRATRKETQLESQLSGG. Positions 16 to 31 are enriched in basic and acidic residues; that stretch reads KIQDERTKRATRKETQ. Residues 116 to 275 enclose the CP-type G domain; the sequence is FGQLKPIAAN…LIDSPGIREF (160 aa). GTP contacts are provided by residues 163 to 166 and 217 to 225; these read NKQD and GQSGVGKSS. The Zn(2+) site is built by Cys-299, Cys-304, His-306, and Cys-312.

The protein belongs to the TRAFAC class YlqF/YawG GTPase family. RsgA subfamily. In terms of assembly, monomer. Associates with 30S ribosomal subunit, binds 16S rRNA. It depends on Zn(2+) as a cofactor.

It localises to the cytoplasm. In terms of biological role, one of several proteins that assist in the late maturation steps of the functional core of the 30S ribosomal subunit. Helps release RbfA from mature subunits. May play a role in the assembly of ribosomal proteins into the subunit. Circularly permuted GTPase that catalyzes slow GTP hydrolysis, GTPase activity is stimulated by the 30S ribosomal subunit. The polypeptide is Small ribosomal subunit biogenesis GTPase RsgA (Hahella chejuensis (strain KCTC 2396)).